The chain runs to 519 residues: Zinc finger and BTB domain-containing protein 18.3 (519 aa).

One can recognise a BTB domain in the interval 24–91; sequence CDCTVLVGDA…MYEGKLQFKD (68 aa). Residues 189–227 are disordered; sequence ASIPQTGGEVDTHTTAAGKTADSPCSSTGSLSHRSATSM. Residues 201-227 show a composition bias toward polar residues; the sequence is HTTAAGKTADSPCSSTGSLSHRSATSM. 4 consecutive C2H2-type zinc fingers follow at residues 367–389, 407–429, 435–457, and 463–486; these read FMCP…LSTH, PTCS…ERTH, FTCT…AVVH, and HACK…RKFH.

It belongs to the krueppel C2H2-type zinc-finger protein family. ZBTB18 subfamily.

The protein localises to the nucleus. Transcriptional repressor that plays a role in various developmental processes. Specifically binds the consensus DNA sequence 5'-[AC]ACATCTG[GT][AC]-3' which contains the E box core, and acts by recruiting chromatin remodeling multiprotein complexes. In Xenopus laevis (African clawed frog), this protein is Zinc finger and BTB domain-containing protein 18.3 (zbtb18.3).